The sequence spans 518 residues: Probable pectinesterase/pectinesterase inhibitor 16 (518 aa).

Positions M1–A33 are cleaved as a signal peptide. The interval T30–L172 is pectinesterase inhibitor 16. N-linked (GlcNAc...) asparagine glycosylation is found at N82 and N161. The segment at D213–N502 is pectinesterase 16. Substrate is bound by residues T289 and Q319. The Proton donor; for pectinesterase activity role is filled by D342. D363 functions as the Nucleophile; for pectinesterase activity in the catalytic mechanism. Residues R422 and W424 each coordinate substrate.

It in the N-terminal section; belongs to the PMEI family. In the C-terminal section; belongs to the pectinesterase family. In terms of tissue distribution, expressed in siliques and floral stems.

The protein resides in the secreted. The protein localises to the cell wall. It carries out the reaction [(1-&gt;4)-alpha-D-galacturonosyl methyl ester](n) + n H2O = [(1-&gt;4)-alpha-D-galacturonosyl](n) + n methanol + n H(+). Its pathway is glycan metabolism; pectin degradation; 2-dehydro-3-deoxy-D-gluconate from pectin: step 1/5. In terms of biological role, acts in the modification of cell walls via demethylesterification of cell wall pectin. The polypeptide is Probable pectinesterase/pectinesterase inhibitor 16 (PME16) (Arabidopsis thaliana (Mouse-ear cress)).